Here is a 129-residue protein sequence, read N- to C-terminus: MADNIPGDLKYTREHEWARVQGTSVVVGVTQHAQESLGDVVYVELPKVGSTVTEGKQFGVIESTKAVSELYSPLTGKVVKVNDGLSDNPSTVNTDPYGAGWIVEIEPSDPKQVDGLMDAAAYTALLQNS.

A Lipoyl-binding domain is found at 24–106 (SVVVGVTQHA…YGAGWIVEIE (83 aa)). An N6-lipoyllysine modification is found at K65.

Belongs to the GcvH family. The glycine cleavage system is composed of four proteins: P, T, L and H. The cofactor is (R)-lipoate.

Its function is as follows. The glycine cleavage system catalyzes the degradation of glycine. The H protein shuttles the methylamine group of glycine from the P protein to the T protein. The polypeptide is Glycine cleavage system H protein (Myxococcus xanthus (strain DK1622)).